A 483-amino-acid chain; its full sequence is Probable glycosyltransferase 4 (483 aa).

At 1–26 (MSKLQDRHGGEAAADVGRRARHQRLL) the chain is on the cytoplasmic side. The helical; Signal-anchor for type II membrane protein transmembrane segment at 27–47 (LSFPVFPIVLLLLAPCTIFFF) threads the bilayer. The Lumenal segment spans residues 48 to 483 (TSGDVPLPRI…KKTSRAARPM (436 aa)). Residues 71-119 (AVAADTSPPPPSPPSSSPPPLSFPPPPPPPSSPPPPALPVVDDHSDTQR) form a disordered region. Residues 77–108 (SPPPPSPPSSSPPPLSFPPPPPPPSSPPPPAL) are compositionally biased toward pro residues. N-linked (GlcNAc...) asparagine glycosylation occurs at Asn-448.

The protein belongs to the glycosyltransferase 34 family.

The protein localises to the golgi apparatus membrane. Probable glycosyltransferase that may be involved in the biosynthesis of xyloglucan. The protein is Probable glycosyltransferase 4 of Oryza sativa subsp. indica (Rice).